The chain runs to 313 residues: D-alanine--D-alanine ligase (313 aa).

The ATP-grasp domain maps to 111–306 (KQVWHSLGLP…FQQLVLAILA (196 aa)). 137 to 192 (AAELGFPLIVKPAHEGSSIGMAKVESVEALIAAWQDAARYDSQVLVEQWIAGPEYT) is an ATP binding site. D260, E273, and N275 together coordinate Mg(2+).

It belongs to the D-alanine--D-alanine ligase family. Mg(2+) is required as a cofactor. Mn(2+) serves as cofactor.

It is found in the cytoplasm. It catalyses the reaction 2 D-alanine + ATP = D-alanyl-D-alanine + ADP + phosphate + H(+). It functions in the pathway cell wall biogenesis; peptidoglycan biosynthesis. Functionally, cell wall formation. The sequence is that of D-alanine--D-alanine ligase from Ectopseudomonas mendocina (strain ymp) (Pseudomonas mendocina).